A 224-amino-acid chain; its full sequence is tRNA (guanine-N(7)-)-methyltransferase (224 aa).

3 residues coordinate S-adenosyl-L-methionine: glutamate 52, aspartate 77, and aspartate 126. Aspartate 126 is a catalytic residue. Substrate contacts are provided by lysine 130 and aspartate 162.

Belongs to the class I-like SAM-binding methyltransferase superfamily. TrmB family.

The enzyme catalyses guanosine(46) in tRNA + S-adenosyl-L-methionine = N(7)-methylguanosine(46) in tRNA + S-adenosyl-L-homocysteine. Its pathway is tRNA modification; N(7)-methylguanine-tRNA biosynthesis. In terms of biological role, catalyzes the formation of N(7)-methylguanine at position 46 (m7G46) in tRNA. This chain is tRNA (guanine-N(7)-)-methyltransferase, found in Christiangramia forsetii (strain DSM 17595 / CGMCC 1.15422 / KT0803) (Gramella forsetii).